The following is a 126-amino-acid chain: Large ribosomal subunit protein bL17 (126 aa).

This sequence belongs to the bacterial ribosomal protein bL17 family. As to quaternary structure, part of the 50S ribosomal subunit. Contacts protein L32.

The protein is Large ribosomal subunit protein bL17 of Limosilactobacillus fermentum (strain NBRC 3956 / LMG 18251) (Lactobacillus fermentum).